The chain runs to 216 residues: Cytidylate kinase (216 aa).

7 to 15 (GPSGTGKST) lines the ATP pocket.

The protein belongs to the cytidylate kinase family. Type 1 subfamily.

It localises to the cytoplasm. It carries out the reaction CMP + ATP = CDP + ADP. The catalysed reaction is dCMP + ATP = dCDP + ADP. The sequence is that of Cytidylate kinase from Chlamydia trachomatis serovar A (strain ATCC VR-571B / DSM 19440 / HAR-13).